Reading from the N-terminus, the 448-residue chain is MRCVNRVDCSWSRPSEAYRILPSGGHLSSGFHQCPLSSLSFRSSFVCCSSSTSGPSDSNPESSSNRSYSRRWQNPLPRRQHPDQIPSSQIARDWIDSDTTPVSQALERFTVVSYNILGDGNSSYHRELYSNVSVPYLKWGYRKRLICEELIRLNPDIISMQEVDKYFDLFSMMEKAGYAGSYKRRTGDNVDGCAMFWKADRFGVLERENIEFSQFGMRDNVAQLAVLELRKSNKSRKILLGNIHVLYNPNQGDVKLGQVRSLCSKAHLLSKKWGDIPIVLCGDFNSTPKSPLYNFLASSELNVMEHDKKELSGQKNCRPTKVLETGSKSSNTITFSFCSSWTKEEIRVATGQENSYWAAHPLKLNSSYASVKGSANTRDSVGEPLATSYHSKFLGTVDYLWYSDGLLPARVLDTLPIDVLCKTKGLPCQELGSDHLALVSEFVFEPDG.

Positions 50–67 (SSTSGPSDSNPESSSNRS) are enriched in low complexity. The tract at residues 50–92 (SSTSGPSDSNPESSSNRSYSRRWQNPLPRRQHPDQIPSSQIAR) is disordered. Glu-162 is a binding site for Mg(2+).

It belongs to the CCR4/nocturin family. As to quaternary structure, component of the CCR4-NOT complex, at least composed of CRR4 and CAF1 proteins. The cofactor is Mg(2+).

The protein localises to the nucleus. Its subcellular location is the cytoplasm. It carries out the reaction Exonucleolytic cleavage of poly(A) to 5'-AMP.. Acts as a catalytic component of the CCR4-NOT core complex, which in the nucleus seems to be a general transcription factor, and in the cytoplasm the major mRNA deadenylase involved in mRNA turnover. This chain is Carbon catabolite repressor protein 4 homolog 3 (CCR4-3), found in Arabidopsis thaliana (Mouse-ear cress).